Consider the following 806-residue polypeptide: Cell cycle progression protein 1 (806 aa).

The Cytoplasmic portion of the chain corresponds to 1–216; it reads MSENSSDSDS…KRQFSSGLNK (216 aa). The interval 1–307 is interaction with MCF2L and SRC; it reads MSENSSDSDS…QKTNLATENQ (307 aa). 2 disordered regions span residues 80–105 and 152–207; these read SSTI…DDSD and VFSS…KESK. The span at 175–184 shows a compositional bias: basic residues; the sequence is FRRRRARKKT. Ser186 is subject to Phosphoserine. Residues 190 to 207 are compositionally biased toward basic and acidic residues; sequence SEDRLVAEQETEPSKESK. A helical; Signal-anchor for type II membrane protein transmembrane segment spans residues 217–237; that stretch reads CVILALVIAVSMGFGHFYGTI. Over 238 to 806 the chain is Lumenal; the sequence is QIQKRQQLVR…LGQLPFDPQY (569 aa). A coiled-coil region spans residues 305 to 449; the sequence is ENQYLRVSLE…EQQRSDLWER (145 aa). The span at 457–467 shows a compositional bias: basic and acidic residues; it reads QSGKQETDGKK. A disordered region spans residues 457–478; that stretch reads QSGKQETDGKKKVGRGNHRAKN. Positions 468-478 are enriched in basic residues; sequence KVGRGNHRAKN. Residues 503–529 are a coiled coil; the sequence is VRHHKEKIKQAKEAVKENLKKFSDSVK. The tract at residues 758–778 is disordered; sequence SRHRKQEQKHLQPQPYKREGK.

The protein belongs to the CCPG1 family. As to quaternary structure, interacts with MCF2L. May interact with MCF2, ARHGEF1, BCR, VAV1 and FGD1, but not with TIAM1. Interacts with GTP-bound CDC42 and SRC.

It is found in the cytoplasmic granule membrane. In terms of biological role, acts as an assembly platform for Rho protein signaling complexes. Limits guanine nucleotide exchange activity of MCF2L toward RHOA, which results in an inhibition of both its transcriptional activation ability and its transforming activity. Does not inhibit activity of MCF2L toward CDC42, or activity of MCF2 toward either RHOA or CDC42. May be involved in cell cycle regulation. The sequence is that of Cell cycle progression protein 1 (CCPG1) from Pongo abelii (Sumatran orangutan).